The sequence spans 419 residues: Enolase (419 aa).

(2R)-2-phosphoglycerate is bound at residue Q161. The Proton donor role is filled by E205. D240, E283, and D309 together coordinate Mg(2+). (2R)-2-phosphoglycerate contacts are provided by K334, R363, S364, and K385. K334 (proton acceptor) is an active-site residue.

Belongs to the enolase family. Mg(2+) serves as cofactor.

Its subcellular location is the cytoplasm. The protein localises to the secreted. The protein resides in the cell surface. It catalyses the reaction (2R)-2-phosphoglycerate = phosphoenolpyruvate + H2O. It functions in the pathway carbohydrate degradation; glycolysis; pyruvate from D-glyceraldehyde 3-phosphate: step 4/5. Functionally, catalyzes the reversible conversion of 2-phosphoglycerate (2-PG) into phosphoenolpyruvate (PEP). It is essential for the degradation of carbohydrates via glycolysis. The chain is Enolase from Saccharolobus islandicus (strain Y.G.57.14 / Yellowstone #1) (Sulfolobus islandicus).